Here is a 329-residue protein sequence, read N- to C-terminus: MIRNPNYTNFVCCAVCNKIIPPAPFGETFKRIHEYKPFKTRFYTHKDILDIGKDILNKEEQFQEDALKERIAQAEADIWAKADERQRQAVKKALEEANDMYKMQIQFLKEEHEKELKEMATRTKMQLHKNLEEELQREHLAAEQRMVHRIQRIMMECHREKVQAVQEAREQERLMAQEEIQSQRRKAMEELMSSGVTVVKDQKKNVNQLIKEKQHEMNLYYCMTQRQKQEEVQEVLQEAEKTHQAKLGSVMDKLVNTQGELLSIAKQLGIMTNWKDFLEEELQETRAAFQKYINYTFPKLSPGHADFILPERKKTPSNLIIPENQTTPD.

A coiled-coil region spans residues 56–247; sequence LNKEEQFQED…EAEKTHQAKL (192 aa).

This is an uncharacterized protein from Bos taurus (Bovine).